A 155-amino-acid chain; its full sequence is Regulatory protein RecX (155 aa).

The protein belongs to the RecX family.

The protein localises to the cytoplasm. Functionally, modulates RecA activity. The sequence is that of Regulatory protein RecX from Pseudomonas savastanoi pv. phaseolicola (strain 1448A / Race 6) (Pseudomonas syringae pv. phaseolicola (strain 1448A / Race 6)).